Consider the following 473-residue polypeptide: Probable glucose-6-phosphate 1-dehydrogenase C7.13c (473 aa).

NADP(+) is bound by residues R43, Y121, and K144. Residues K144, 174–178 (HYTAK), E213, and D232 each bind D-glucose 6-phosphate. H237 functions as the Proton acceptor in the catalytic mechanism. Position 331 (K331) interacts with D-glucose 6-phosphate. K341 contacts NADP(+). Residue Q366 coordinates D-glucose 6-phosphate.

Belongs to the glucose-6-phosphate dehydrogenase family.

Its subcellular location is the cytoplasm. It carries out the reaction D-glucose 6-phosphate + NADP(+) = 6-phospho-D-glucono-1,5-lactone + NADPH + H(+). The protein operates within carbohydrate degradation; pentose phosphate pathway; D-ribulose 5-phosphate from D-glucose 6-phosphate (oxidative stage): step 1/3. In terms of biological role, catalyzes the rate-limiting step of the oxidative pentose-phosphate pathway, which represents a route for the dissimilation of carbohydrates besides glycolysis. The main function of this enzyme is to provide reducing power (NADPH) and pentose phosphates for fatty acid and nucleic acid synthesis. The sequence is that of Probable glucose-6-phosphate 1-dehydrogenase C7.13c from Schizosaccharomyces pombe (strain 972 / ATCC 24843) (Fission yeast).